A 268-amino-acid polypeptide reads, in one-letter code: Stomatin homolog PYRAB06580 (268 aa).

The helical transmembrane segment at 1–21 (MILPTNFFVTTIILLFILIFL) threads the bilayer. Coiled coils occupy residues 125 to 152 (GQAH…EATD) and 178 to 213 (KQAE…ISEH).

Belongs to the band 7/mec-2 family. Homotrimer.

Its subcellular location is the membrane. This chain is Stomatin homolog PYRAB06580, found in Pyrococcus abyssi (strain GE5 / Orsay).